A 90-amino-acid chain; its full sequence is Probable Fe(2+)-trafficking protein (90 aa).

This sequence belongs to the Fe(2+)-trafficking protein family.

Could be a mediator in iron transactions between iron acquisition and iron-requiring processes, such as synthesis and/or repair of Fe-S clusters in biosynthetic enzymes. This Vibrio atlanticus (strain LGP32) (Vibrio splendidus (strain Mel32)) protein is Probable Fe(2+)-trafficking protein.